The primary structure comprises 425 residues: CinA-like protein (425 aa).

This sequence belongs to the CinA family.

This Trichodesmium erythraeum (strain IMS101) protein is CinA-like protein.